A 304-amino-acid polypeptide reads, in one-letter code: Non-specific ribonucleoside hydrolase RihC (304 aa).

The active site involves His-233.

Belongs to the IUNH family. RihC subfamily.

Its function is as follows. Hydrolyzes both purine and pyrimidine ribonucleosides with a broad-substrate specificity. In Escherichia coli (strain 55989 / EAEC), this protein is Non-specific ribonucleoside hydrolase RihC.